We begin with the raw amino-acid sequence, 532 residues long: Developmental and secondary metabolism regulator ve1 (532 aa).

In terms of domain architecture, Velvet spans 26–220; it reads NRSLWYQLTV…ADQGCRVRIR (195 aa). The short motif at 40-45 is the Nuclear localization signal element; the sequence is ERARAC. Residues 217–229 show a composition bias toward basic residues; the sequence is VRIRRDVRMRKRD. 2 disordered regions span residues 217-440 and 458-520; these read VRIR…TEPS and PQVD…RADG. The segment covering 233 to 250 has biased composition (low complexity); it reads GGNNNNNNNAGNNAGNNG. Composition is skewed to basic and acidic residues over residues 251 to 260 and 283 to 294; these read FERREEDFGR and SEHRASYSDVSR. A compositionally biased stretch (pro residues) spans 302-317; that stretch reads YPPPPPPPPSYDPTPS. A compositionally biased stretch (low complexity) spans 397–411; the sequence is STSTYVPPSPSVYST. Residues 435–463 form a PEST region; the sequence is MNTEPSRGSIKISALVEPMPVIEPQVDPL. Residues 481 to 493 are compositionally biased toward polar residues; the sequence is FAQNTRPLFNGQR.

Belongs to the velvet family. VeA subfamily. In terms of assembly, component of the heterotrimeric velvet complex composed of laeA, ve1 and velB; Ve1 acting as a bridging protein between laeA and velB. Interacts directly with laeA and velB.

Its subcellular location is the nucleus. The protein resides in the cytoplasm. Its function is as follows. Component of the velvet transcription factor complex that controls sexual/asexual developmental ratio in response to light, promoting sexual development in the darkness while stimulating asexual sporulation under illumination. The velvet complex hat acts as a global regulator for secondary metabolite gene expression. Controls the expression of the aurofusarin and trichothecene gene clusters. Also controls the expression of the deoxynivalenol (DON) gene cluster. Regulates hyphal growth and pigment formation. Acts as a positive regulator of virulence. This Gibberella zeae (strain ATCC MYA-4620 / CBS 123657 / FGSC 9075 / NRRL 31084 / PH-1) (Wheat head blight fungus) protein is Developmental and secondary metabolism regulator ve1.